We begin with the raw amino-acid sequence, 239 residues long: tRNA (guanine-N(1)-)-methyltransferase (239 aa).

Residues glycine 108 and 127-132 (IGDYVL) each bind S-adenosyl-L-methionine.

This sequence belongs to the RNA methyltransferase TrmD family. In terms of assembly, homodimer.

The protein localises to the cytoplasm. It catalyses the reaction guanosine(37) in tRNA + S-adenosyl-L-methionine = N(1)-methylguanosine(37) in tRNA + S-adenosyl-L-homocysteine + H(+). Its function is as follows. Specifically methylates guanosine-37 in various tRNAs. The protein is tRNA (guanine-N(1)-)-methyltransferase of Lactobacillus helveticus (strain DPC 4571).